The chain runs to 263 residues: HTH-type transcriptional repressor NanR (263 aa).

A disordered region spans residues 1–22; it reads MGLMNAFDSQTEDSSPAIGRNL. One can recognise an HTH gntR-type domain in the interval 30–98; it reads KKLSEMVEEE…NGERARVSRP (69 aa). A DNA-binding region (H-T-H motif) is located at residues 58–77; that stretch reads ERELMAFFNVGRPSVREALA.

The protein belongs to the NanR family.

Functionally, transcriptional repressor that controls expression of the genes required for the catabolism of sialic acids. This is HTH-type transcriptional repressor NanR from Escherichia coli (strain 55989 / EAEC).